The primary structure comprises 421 residues: Gamma-glutamyl phosphate reductase (421 aa).

The protein belongs to the gamma-glutamyl phosphate reductase family.

Its subcellular location is the cytoplasm. It carries out the reaction L-glutamate 5-semialdehyde + phosphate + NADP(+) = L-glutamyl 5-phosphate + NADPH + H(+). It functions in the pathway amino-acid biosynthesis; L-proline biosynthesis; L-glutamate 5-semialdehyde from L-glutamate: step 2/2. Functionally, catalyzes the NADPH-dependent reduction of L-glutamate 5-phosphate into L-glutamate 5-semialdehyde and phosphate. The product spontaneously undergoes cyclization to form 1-pyrroline-5-carboxylate. This chain is Gamma-glutamyl phosphate reductase, found in Nitrosospira multiformis (strain ATCC 25196 / NCIMB 11849 / C 71).